The chain runs to 179 residues: Peptide deformylase (179 aa).

Fe cation contacts are provided by cysteine 103 and histidine 145. Glutamate 146 is a catalytic residue. Histidine 149 lines the Fe cation pocket.

This sequence belongs to the polypeptide deformylase family. Fe(2+) serves as cofactor.

It catalyses the reaction N-terminal N-formyl-L-methionyl-[peptide] + H2O = N-terminal L-methionyl-[peptide] + formate. Removes the formyl group from the N-terminal Met of newly synthesized proteins. Requires at least a dipeptide for an efficient rate of reaction. N-terminal L-methionine is a prerequisite for activity but the enzyme has broad specificity at other positions. The chain is Peptide deformylase from Leptospira biflexa serovar Patoc (strain Patoc 1 / Ames).